An 83-amino-acid polypeptide reads, in one-letter code: Large ribosomal subunit protein bL27 (83 aa).

The interval 1–25 (MAHKKGQGASRNGRDSESKRLGLKV) is disordered.

It belongs to the bacterial ribosomal protein bL27 family.

The chain is Large ribosomal subunit protein bL27 from Chlamydia trachomatis serovar L2 (strain ATCC VR-902B / DSM 19102 / 434/Bu).